A 169-amino-acid chain; its full sequence is Inorganic pyrophosphatase (169 aa).

M1 is subject to N-formylmethionine. Positions 28, 42, and 54 each coordinate substrate. Mg(2+) contacts are provided by D64, D69, and D101. Y138 is a binding site for substrate.

Belongs to the PPase family. In terms of assembly, homohexamer. Requires Mg(2+) as cofactor.

The protein resides in the cytoplasm. The enzyme catalyses diphosphate + H2O = 2 phosphate + H(+). With respect to regulation, inhibited by ATP, but not by fructose 1,6-bisphosphate or 2-phosphoglycerate. Its function is as follows. Hydrolyzes PPi generated in anabolic reactions. Catalyzes the hydrolysis of inorganic pyrophosphate (PPi) forming two phosphate ions. In Synechocystis sp. (strain ATCC 27184 / PCC 6803 / Kazusa), this protein is Inorganic pyrophosphatase.